A 556-amino-acid chain; its full sequence is Formate--tetrahydrofolate ligase 2 (556 aa).

Position 65 to 72 (65 to 72 (TPAGEGKS)) interacts with ATP.

It belongs to the formate--tetrahydrofolate ligase family.

It carries out the reaction (6S)-5,6,7,8-tetrahydrofolate + formate + ATP = (6R)-10-formyltetrahydrofolate + ADP + phosphate. It participates in one-carbon metabolism; tetrahydrofolate interconversion. This Streptococcus sanguinis (strain SK36) protein is Formate--tetrahydrofolate ligase 2.